The chain runs to 232 residues: Small ribosomal subunit protein uS3 (232 aa).

Positions 39 to 107 constitute a KH type-2 domain; the sequence is IREILHKELK…DVVINIVEIR (69 aa).

This sequence belongs to the universal ribosomal protein uS3 family. In terms of assembly, part of the 30S ribosomal subunit. Forms a tight complex with proteins S10 and S14.

In terms of biological role, binds the lower part of the 30S subunit head. Binds mRNA in the 70S ribosome, positioning it for translation. This is Small ribosomal subunit protein uS3 from Rhodopseudomonas palustris (strain HaA2).